Here is a 6359-residue protein sequence, read N- to C-terminus: Bacitracin synthase 3 (6359 aa).

Residues 461–1034 are domain 1 (isoleucine-activating); sequence LHELFEEQAM…IKGLGEYIRS (574 aa). Positions 941–953 are enriched in basic and acidic residues; that stretch reads VDRKALPEPDRTA. A disordered region spans residues 941–962; it reads VDRKALPEPDRTAGAENEYEAP. Carrier domains lie at 961 to 1036, 1993 to 2067, 3497 to 3572, 4539 to 4613, and 6047 to 6122; these read APRN…RSTK, APRN…KKQS, APRN…ESMK, PPRN…KAES, and PPRH…KHAQ. Residues serine 996, serine 2028, and serine 3532 each carry the O-(pantetheine 4'-phosphoryl)serine modification. Residues 1517–2064 are domain 2 (D-phenylalanine-activating); the sequence is FEDQTLTYRQ…RIKDLAKYVK (548 aa). Residues 2999–3570 are domain 3 (histidine-activating); sequence NKTIHQLFEE…IKDIGDFIES (572 aa). Positions 4047 to 4612 are domain 4 (D-aspartic acid-activating); the sequence is EQTAVVYADE…KSLSRYVKAE (566 aa). The segment at 4521 to 4544 is disordered; sequence IDTAALPEPQPGKETEYEPPRNET. Residues 4531-4544 show a composition bias toward basic and acidic residues; that stretch reads PGKETEYEPPRNET. An O-(pantetheine 4'-phosphoryl)serine mark is found at serine 4574 and serine 6082. Residues 5549–6129 are domain 5 (asparagine-activating); the sequence is IHRLFEEQAE…HAQDLLKDYT (581 aa).

The protein belongs to the ATP-dependent AMP-binding enzyme family. In terms of assembly, large multienzyme complex of BA1, BA2 and BA3. Pantetheine 4'-phosphate serves as cofactor.

The catalysed reaction is L-aspartate = D-aspartate. The enzyme catalyses L-phenylalanine + ATP + H2O = D-phenylalanine + AMP + diphosphate + H(+). Its pathway is antibiotic biosynthesis; bacitracin biosynthesis. In terms of biological role, induces peptide synthesis, activates and incorporates five amino acids, forms a thiazoline ring between the first two amino acids and incorporates a D-glutamine in the fourth position. The sequence is that of Bacitracin synthase 3 (bacC) from Bacillus licheniformis.